A 270-amino-acid chain; its full sequence is NAD kinase (270 aa).

Catalysis depends on aspartate 49, which acts as the Proton acceptor. NAD(+) is bound by residues 49–50 (DG), arginine 54, 126–127 (NE), arginine 152, aspartate 154, 165–170 (TAYNKS), alanine 189, and glutamine 227.

It belongs to the NAD kinase family. A divalent metal cation serves as cofactor.

Its subcellular location is the cytoplasm. The enzyme catalyses NAD(+) + ATP = ADP + NADP(+) + H(+). Functionally, involved in the regulation of the intracellular balance of NAD and NADP, and is a key enzyme in the biosynthesis of NADP. Catalyzes specifically the phosphorylation on 2'-hydroxyl of the adenosine moiety of NAD to yield NADP. The chain is NAD kinase from Lactococcus lactis subsp. lactis (strain IL1403) (Streptococcus lactis).